Reading from the N-terminus, the 179-residue chain is GTP-dependent dephospho-CoA kinase (179 aa).

6 residues coordinate GTP: D49, V50, V51, D68, K70, and E126.

This sequence belongs to the GTP-dependent DPCK family.

It catalyses the reaction 3'-dephospho-CoA + GTP = GDP + CoA + H(+). It participates in cofactor biosynthesis; coenzyme A biosynthesis. Catalyzes the GTP-dependent phosphorylation of the 3'-hydroxyl group of dephosphocoenzyme A to form coenzyme A (CoA). The chain is GTP-dependent dephospho-CoA kinase from Pyrococcus abyssi (strain GE5 / Orsay).